Here is a 36-residue protein sequence, read N- to C-terminus: Putative DNA-binding protein inhibitor ID-2B (36 aa).

This Homo sapiens (Human) protein is Putative DNA-binding protein inhibitor ID-2B (ID2B).